The primary structure comprises 237 residues: Protein UL24 homolog (237 aa).

This sequence belongs to the herpesviridae UL24 family.

This Equus caballus (Horse) protein is Protein UL24 homolog (20).